Consider the following 212-residue polypeptide: Tetraspanin-31-B (212 aa).

Topologically, residues 1–12 (MVCGGFTCSKNA) are cytoplasmic. Residues 13–33 (LCALNVVYMLVGVLLIIVAAW) form a helical membrane-spanning segment. The Extracellular portion of the chain corresponds to 34–44 (GKGFGIVSSIH). A helical membrane pass occupies residues 45 to 65 (IIGGVIAIGVFLLLIAIIGLI). Residues 66-72 (GAVSHHQ) lie on the Cytoplasmic side of the membrane. Residues 73-93 (VMLFIYMVVLILVFIFQFIVS) form a helical membrane-spanning segment. Residues 94–175 (CSCLAMNRSQ…MLNHADEALK (82 aa)) are Extracellular-facing. N-linked (GlcNAc...) asparagine glycosylation is found at asparagine 100, asparagine 109, asparagine 117, and asparagine 134. The helical transmembrane segment at 176 to 196 (ILGGVGLFFSFTEILGVWLAF) threads the bilayer. Residues 197-212 (RYRNQKDPRANPSAFL) are Cytoplasmic-facing.

This sequence belongs to the tetraspanin (TM4SF) family.

Its subcellular location is the membrane. The protein is Tetraspanin-31-B (tspan31-b) of Xenopus laevis (African clawed frog).